The chain runs to 361 residues: Chorismate synthase (361 aa).

2 residues coordinate NADP(+): Arg-48 and Arg-54. Residues 125 to 127, 238 to 239, Gly-278, 293 to 297, and Arg-319 contribute to the FMN site; these read RSS, NA, and KPTSS.

This sequence belongs to the chorismate synthase family. Homotetramer. It depends on FMNH2 as a cofactor.

The catalysed reaction is 5-O-(1-carboxyvinyl)-3-phosphoshikimate = chorismate + phosphate. It functions in the pathway metabolic intermediate biosynthesis; chorismate biosynthesis; chorismate from D-erythrose 4-phosphate and phosphoenolpyruvate: step 7/7. In terms of biological role, catalyzes the anti-1,4-elimination of the C-3 phosphate and the C-6 proR hydrogen from 5-enolpyruvylshikimate-3-phosphate (EPSP) to yield chorismate, which is the branch point compound that serves as the starting substrate for the three terminal pathways of aromatic amino acid biosynthesis. This reaction introduces a second double bond into the aromatic ring system. In Cronobacter sakazakii (strain ATCC BAA-894) (Enterobacter sakazakii), this protein is Chorismate synthase.